Here is a 124-residue protein sequence, read N- to C-terminus: Small ribosomal subunit protein uS12c (124 aa).

2 disordered regions span residues 1–28 and 104–124; these read MPTI…QSCP and AAGV…KPKS. 2 stretches are compositionally biased toward basic residues: residues 11–20 and 109–124; these read ERRKIHKKTK and DRRK…KPKS.

This sequence belongs to the universal ribosomal protein uS12 family. As to quaternary structure, part of the 30S ribosomal subunit.

It localises to the plastid. The protein localises to the chloroplast. In terms of biological role, with S4 and S5 plays an important role in translational accuracy. Located at the interface of the 30S and 50S subunits. The protein is Small ribosomal subunit protein uS12c (rps12) of Pyropia yezoensis (Susabi-nori).